A 342-amino-acid polypeptide reads, in one-letter code: Probable RNA methyltransferase PST_2231 (342 aa).

Catalysis depends on E91, which acts as the Proton acceptor. The Radical SAM core domain occupies 94–320 (LLPRDGLCVS…TKVRNSAGQD (227 aa)). Residues C101 and C325 are joined by a disulfide bond. The [4Fe-4S] cluster site is built by C108, C112, and C115. Residues 153–154 (GE), S183, 206–208 (SLH), and N282 contribute to the S-adenosyl-L-methionine site. C325 (S-methylcysteine intermediate) is an active-site residue.

The protein belongs to the radical SAM superfamily. RlmN family. [4Fe-4S] cluster is required as a cofactor.

Its subcellular location is the cytoplasm. This is Probable RNA methyltransferase PST_2231 from Stutzerimonas stutzeri (strain A1501) (Pseudomonas stutzeri).